The chain runs to 413 residues: Tubby-like F-box protein 6 (413 aa).

Residues serine 67–glycine 122 enclose the F-box domain.

This sequence belongs to the TUB family. Ubiquitous, with higher levels in flowers.

The chain is Tubby-like F-box protein 6 from Arabidopsis thaliana (Mouse-ear cress).